We begin with the raw amino-acid sequence, 726 residues long: tRNA endonuclease ANKZF1 (726 aa).

The interval 40–61 is disordered; it reads LARAPRTSCSGSGERESPERKL. A compositionally biased stretch (basic and acidic residues) spans 52–61; that stretch reads GERESPERKL. Residues 72-96 form a C2H2-type zinc finger; the sequence is LFCSTCDQTFQNHQEQREHYKLDWH. The segment covering 120-130 has biased composition (low complexity); the sequence is STGDLSSISGS. The interval 120 to 141 is disordered; sequence STGDLSSISGSEDSDSASEEDL. Residues 131–141 are compositionally biased toward acidic residues; the sequence is EDSDSASEEDL. Residues 203–346 enclose the VLRF1 domain; the sequence is GPRDCVVLMA…QRVLHKLTTL (144 aa). The active site involves Gln-246. Residues Ser-258, Ser-361, and Ser-398 each carry the phosphoserine modification. Disordered stretches follow at residues 387-409 and 436-474; these read DEKEALGQNEESPKQGSGSEGED and RRRRKRNKKEKSRDQEAGAHRTLLQQTQEEEPSTQSSQA. The segment covering 436-445 has biased composition (basic residues); that stretch reads RRRRKRNKKE. Low complexity predominate over residues 457-473; the sequence is TLLQQTQEEEPSTQSSQ. The stretch at 493–526 is one ANK 1 repeat; it reads ELWNALLAACRAGDVGVLKLQLAPSPADPRVLSL. Position 533 is a phosphoserine (Ser-533). An ANK 2 repeat occupies 534 to 563; sequence GGFTLLHAAAAAGRGSVVRLLLEAGADPTV. The interval 588-656 is disordered; the sequence is MEKNPDAYDY…RRFAALSDRE (69 aa). Thr-607 carries the phosphothreonine modification. The stretch at 609–659 forms a coiled coil; the sequence is EMEARQATRKREQKAARRQREEQQQRQQEQEEREREEQRRFAALSDREKRA. Residues 610–656 show a composition bias toward basic and acidic residues; sequence MEARQATRKREQKAARRQREEQQQRQQEQEEREREEQRRFAALSDRE. Positions 654–666 are VCP/p97-interacting motif (VIM); sequence DREKRALAAERRL. A phosphoserine mark is found at Ser-675 and Ser-680.

This sequence belongs to the ANKZF1/VMS1 family. In terms of assembly, interacts (via VIM motif) with VCP.

The protein resides in the cytoplasm. Functionally, endonuclease that cleaves polypeptidyl-tRNAs downstream of the ribosome-associated quality control (RQC) pathway to release incompletely synthesized polypeptides for degradation. The RQC pathway disassembles aberrantly stalled translation complexes to recycle or degrade the constituent parts. ANKZF1 acts downstream disassembly of stalled ribosomes and specifically cleaves off the terminal 3'-CCA nucleotides universal to all tRNAs from polypeptidyl-tRNAs, releasing (1) ubiquitinated polypeptides from 60S ribosomal subunit for degradation and (2) cleaved tRNAs. ANKZF1-cleaved tRNAs are then repaired and recycled by ELAC1 and TRNT1. Also plays a role in the cellular response to hydrogen peroxide and in the maintenance of mitochondrial integrity under conditions of cellular stress. The sequence is that of tRNA endonuclease ANKZF1 from Homo sapiens (Human).